We begin with the raw amino-acid sequence, 396 residues long: Elongation factor Tu (396 aa).

The tr-type G domain maps to 10–205 (KPHVNIGTIG…AVDESIPDPV (196 aa)). Residues 19 to 26 (GHVDHGKT) form a G1 region. 19–26 (GHVDHGKT) provides a ligand contact to GTP. T26 is a binding site for Mg(2+). The segment at 62–66 (GITIN) is G2. A G3 region spans residues 83–86 (DAPG). GTP-binding positions include 83-87 (DAPGH) and 138-141 (NKAD). The segment at 138–141 (NKAD) is G4. A G5 region spans residues 175-177 (SAL).

This sequence belongs to the TRAFAC class translation factor GTPase superfamily. Classic translation factor GTPase family. EF-Tu/EF-1A subfamily. Monomer.

It is found in the cytoplasm. It catalyses the reaction GTP + H2O = GDP + phosphate + H(+). In terms of biological role, GTP hydrolase that promotes the GTP-dependent binding of aminoacyl-tRNA to the A-site of ribosomes during protein biosynthesis. The protein is Elongation factor Tu of Rhodococcus jostii (strain RHA1).